Consider the following 501-residue polypeptide: LIM domain-containing protein HDR3 (501 aa).

The tract at residues 33–67 (GEANRRRPRVTAGEETTLWEEPVRPKKEEPPRHNN) is disordered. Basic and acidic residues predominate over residues 53 to 67 (EPVRPKKEEPPRHNN). UIM domains follow at residues 65-84 (HNNE…DAKN) and 94-113 (ENDE…NPYQ). Residues 131–191 (RVCGGCKHEI…KLCYKELHHP (61 aa)) enclose the LIM zinc-binding domain. The segment at 429 to 448 (YASSSSSSCRPPPSKKGGIS) is disordered.

As to quaternary structure, interacts (via N-terminus) with GW6A (via C-terminus).

In terms of biological role, ubiquitin receptor that functions as a positive regulator of grain size and weight. Functions in the same genetic pathway as GW6A to regulate grain size. Modulates grain size in a similar manner to GW6A, by altering cell proliferation in spikelet hulls. Interacts with and enhances the ubiquitination of GW6A. This stabilizes GW6A, delays protein degradation by the 26S proteasome and enhances GW6A histone acetyltransferase activity. The chain is LIM domain-containing protein HDR3 from Oryza sativa subsp. japonica (Rice).